We begin with the raw amino-acid sequence, 369 residues long: Choline kinase B2 (369 aa).

Belongs to the choline/ethanolamine kinase family. It depends on Mg(2+) as a cofactor.

The enzyme catalyses choline + ATP = phosphocholine + ADP + H(+). The protein operates within phospholipid metabolism; phosphatidylcholine biosynthesis; phosphocholine from choline: step 1/1. Its function is as follows. Catalyzes the first step in phosphatidylcholine biosynthesis. Phosphorylates choline. The chain is Choline kinase B2 (ckb-2) from Caenorhabditis elegans.